Reading from the N-terminus, the 353-residue chain is Tetrahedral aminopeptidase (353 aa).

The Zn(2+) site is built by histidine 68 and aspartate 182. Glutamate 212 serves as the catalytic Proton acceptor. 3 residues coordinate Zn(2+): glutamate 213, aspartate 235, and histidine 323.

It belongs to the peptidase M42 family. As to quaternary structure, homododecamer. The assembly of six dimers results in a tetrahedral-shaped structure; all 12 active sites are located on the inside of the tetrahedron. Substrate access is granted by four pores with a maximal diameter of 18 Angstroms, allowing only small peptides and unfolded proteins access to the active site. Beside the four entry ports, TET contains 12 small product release openings, which are large enough to allow passage of only single amino acid residues. Zn(2+) serves as cofactor. Requires Co(2+) as cofactor.

Its activity is regulated as follows. Inhibited by EDTA and bestatin in vitro. Is insensitive to papain, antipain, chymostatin, leupeptin, pepstatin and aprotinin. Functions as an aminopeptidase, with a clear preference for leucine as the N-terminal amino acid. However, can also cleave moderately long polypeptide substrates of various compositions in a fairly unspecific manner. Has neither carboxypeptidase nor endoproteolytic activities, and it is devoid of N-terminal deblocking activity. Is involved in protein degradation, performing degradation of oligopeptides produced by the proteasome into single amino acids. The polypeptide is Tetrahedral aminopeptidase (frvX) (Pyrococcus horikoshii (strain ATCC 700860 / DSM 12428 / JCM 9974 / NBRC 100139 / OT-3)).